The sequence spans 488 residues: Type II restriction enzyme HgaI (488 aa).

It carries out the reaction Endonucleolytic cleavage of DNA to give specific double-stranded fragments with terminal 5'-phosphates.. An S subtype restriction enzyme that recognizes the double-stranded sequences 5'-GACGC-3' and 5'-GCGTC-3' and cleaves respectively 10 bases after G-1 and 10 bases before G'-1. The sequence is that of Type II restriction enzyme HgaI (hgaIR) from Avibacterium volantium (Pasteurella volantium).